A 483-amino-acid chain; its full sequence is Alpha-tubulin N-acetyltransferase (483 aa).

Residues 1 to 186 (MEFRFNMHPL…NNFVVYEGFF (186 aa)) enclose the N-acetyltransferase domain. Residues 120 to 133 (FYVH…GLGR) and 156 to 165 (SEKLLGFLQK) each bind acetyl-CoA. 3 disordered regions span residues 204-231 (TASP…QTRT), 330-395 (ETLP…VLGS), and 437-472 (SVKI…GGGH). The segment covering 347-369 (YDFHPHHLELHDDTEGGGSHRDQ) has biased composition (basic and acidic residues). Low complexity predominate over residues 370 to 383 (SLSPQSVSQQASPV).

The protein belongs to the acetyltransferase ATAT1 family.

The enzyme catalyses L-lysyl-[alpha-tubulin] + acetyl-CoA = N(6)-acetyl-L-lysyl-[alpha-tubulin] + CoA + H(+). Specifically acetylates 'Lys-40' in alpha-tubulin on the lumenal side of microtubules. Promotes microtubule destabilization and accelerates microtubule dynamics; this activity may be independent of acetylation activity. Acetylates alpha-tubulin with a slow enzymatic rate, due to a catalytic site that is not optimized for acetyl transfer. Enters the microtubule through each end and diffuses quickly throughout the lumen of microtubules. Acetylates only long/old microtubules because of its slow acetylation rate since it does not have time to act on dynamically unstable microtubules before the enzyme is released. This chain is Alpha-tubulin N-acetyltransferase, found in Anopheles gambiae (African malaria mosquito).